The primary structure comprises 260 residues: Indole-3-glycerol phosphate synthase (260 aa).

This sequence belongs to the TrpC family.

The enzyme catalyses 1-(2-carboxyphenylamino)-1-deoxy-D-ribulose 5-phosphate + H(+) = (1S,2R)-1-C-(indol-3-yl)glycerol 3-phosphate + CO2 + H2O. It participates in amino-acid biosynthesis; L-tryptophan biosynthesis; L-tryptophan from chorismate: step 4/5. This is Indole-3-glycerol phosphate synthase from Staphylococcus aureus (strain MRSA252).